Consider the following 282-residue polypeptide: Fibrinogen-like protein A (282 aa).

The N-terminal stretch at 1-24 is a signal peptide; the sequence is MFSFIMKAAILLILVGCISFCISS. The Fibrinogen C-terminal domain maps to 61 to 281; the sequence is SHSPEYPRDC…FAEMKLRNRS (221 aa). Intrachain disulfides connect C70/C101 and C224/C240.

This chain is Fibrinogen-like protein A, found in Apostichopus parvimensis (Warty sea cucumber).